The sequence spans 279 residues: Diaminopimelate epimerase (279 aa).

The substrate site is built by Asn11 and Asn64. Cys73 acts as the Proton donor in catalysis. Substrate contacts are provided by residues Gly74–Asn75, Asn170, and Glu187–Arg188. The active-site Proton acceptor is the Cys196. A substrate-binding site is contributed by Gly197–Ser198. The interval Asn255–Arg279 is disordered.

Belongs to the diaminopimelate epimerase family. As to quaternary structure, homodimer.

The protein localises to the cytoplasm. The catalysed reaction is (2S,6S)-2,6-diaminopimelate = meso-2,6-diaminopimelate. The protein operates within amino-acid biosynthesis; L-lysine biosynthesis via DAP pathway; DL-2,6-diaminopimelate from LL-2,6-diaminopimelate: step 1/1. Functionally, catalyzes the stereoinversion of LL-2,6-diaminopimelate (L,L-DAP) to meso-diaminopimelate (meso-DAP), a precursor of L-lysine. The polypeptide is Diaminopimelate epimerase (Methanopyrus kandleri (strain AV19 / DSM 6324 / JCM 9639 / NBRC 100938)).